Here is a 104-residue protein sequence, read N- to C-terminus: Co-chaperonin GroES 2 (104 aa).

It belongs to the GroES chaperonin family. As to quaternary structure, heptamer of 7 subunits arranged in a ring. Interacts with the chaperonin GroEL.

It localises to the cytoplasm. Its function is as follows. Together with the chaperonin GroEL, plays an essential role in assisting protein folding. The GroEL-GroES system forms a nano-cage that allows encapsulation of the non-native substrate proteins and provides a physical environment optimized to promote and accelerate protein folding. GroES binds to the apical surface of the GroEL ring, thereby capping the opening of the GroEL channel. This chain is Co-chaperonin GroES 2, found in Rhodopseudomonas palustris (strain ATCC BAA-98 / CGA009).